Reading from the N-terminus, the 248-residue chain is Probable transcriptional regulatory protein Rsph17025_0577 (248 aa).

The tract at residues 1–21 (MAGHSKWANIQHRKGKQDKLR) is disordered.

Belongs to the TACO1 family.

It is found in the cytoplasm. The protein is Probable transcriptional regulatory protein Rsph17025_0577 of Cereibacter sphaeroides (strain ATCC 17025 / ATH 2.4.3) (Rhodobacter sphaeroides).